The chain runs to 301 residues: MSEDIRRGPGRPPKKRVVPNFERKGILEKPVRPQSRLEFSYDNPLIFKNLFIYFKNLKSKNILVRCTPTEITFFSRDQSQASFVIATIDGKNVNHYYASDVFWLGINRELVEKMFNSIDRSFLKITIVHRYDKPETLFFIFTDFDIDKECTYHITVSEPELDMDLIEMEKSISEERLKNYPLRWEFTSKQLKKTFSDLSNYTELVTIEKLGGDTPLHLYFQKFNSISYHEMYKSSNKINLTSTIPKSQVFQINVKIAHIKSLASAMVTDKIRILCEENGNLIFQSEMDALMLNTITLNNMI.

Belongs to the asfivirus E301R family. As to quaternary structure, interacts with host IRF3.

Functionally, plays a role in the inhibition of host innate immune system by acting as a negatively regulator of type I interferon production. Mechanistically, interacts with and prevents host IRF3 nuclear localization to inhibit its transcriptional activity. This is an uncharacterized protein from African swine fever virus (isolate Tick/South Africa/Pretoriuskop Pr4/1996) (ASFV).